The following is a 1522-amino-acid chain: Lysophospholipase nte1 (1522 aa).

The segment at methionine 1–serine 24 is disordered. The Cytoplasmic segment spans residues methionine 1 to glycine 65. A compositionally biased stretch (low complexity) spans serine 15 to serine 24. Residues tryptophan 66–isoleucine 86 form a helical membrane-spanning segment. Over threonine 87–threonine 108 the chain is Lumenal. Residues methionine 109–isoleucine 129 form a helical membrane-spanning segment. Topologically, residues arginine 130 to isoleucine 1522 are cytoplasmic. 3 disordered regions span residues valine 308–proline 384, arginine 523–proline 544, and threonine 757–arginine 776. The segment covering glutamate 369–serine 381 has biased composition (basic residues). A nucleoside 3',5'-cyclic phosphate contacts are provided by residues glycine 680–serine 800 and arginine 840–arginine 960. One can recognise a PNPLA domain in the interval leucine 1219–lysine 1383. Positions glycine 1223–glycine 1228 match the GXGXXG motif. Residues glycine 1250–glycine 1254 carry the GXSXG motif. Serine 1252 acts as the Nucleophile in catalysis. Aspartate 1370 (proton acceptor) is an active-site residue. Residues aspartate 1370–glycine 1372 carry the DGA/G motif. The segment at leucine 1501 to isoleucine 1522 is disordered.

It belongs to the NTE family.

The protein resides in the endoplasmic reticulum membrane. The catalysed reaction is a 1-acyl-sn-glycero-3-phosphocholine + H2O = sn-glycerol 3-phosphocholine + a fatty acid + H(+). Inhibited by organophosphorus esters. Functionally, intracellular phospholipase B that catalyzes the double deacylation of phosphatidylcholine (PC) to glycerophosphocholine (GroPCho). Plays an important role in membrane lipid homeostasis. Responsible for the rapid PC turnover in response to inositol, elevated temperatures, or when choline is present in the growth medium. This Aspergillus fumigatus (strain ATCC MYA-4609 / CBS 101355 / FGSC A1100 / Af293) (Neosartorya fumigata) protein is Lysophospholipase nte1 (nte1).